The primary structure comprises 202 residues: Tetranectin (202 aa).

The N-terminal stretch at 1–21 is a signal peptide; it reads MELWGPCVLLCLFSLLTQVTA. Disulfide bonds link cysteine 71-cysteine 81, cysteine 98-cysteine 197, and cysteine 173-cysteine 189. One can recognise a C-type lectin domain in the interval 77 to 198; the sequence is VHMKCFLAFV…CRDKLPYVCQ (122 aa).

As to quaternary structure, homotrimer.

It localises to the secreted. Tetranectin binds to plasminogen and to isolated kringle 4. May be involved in the packaging of molecules destined for exocytosis. Plays a role in retinal function. In Bos taurus (Bovine), this protein is Tetranectin (CLEC3B).